The chain runs to 394 residues: Flap endonuclease 1 (394 aa).

The tract at residues 1 to 104 is N-domain; the sequence is MGIKQLFSVI…GELAKRFQRK (104 aa). Residue Asp34 participates in Mg(2+) binding. 2 residues coordinate DNA: Arg47 and Arg70. 5 residues coordinate Mg(2+): Asp86, Glu158, Glu160, Asp179, and Asp181. Residues 122 to 253 are I-domain; that stretch reads DVEKFSRRTV…STALKLIREH (132 aa). A DNA-binding site is contributed by Glu158. Gly231 and Asp233 together coordinate DNA. Residue Asp233 coordinates Mg(2+). Residues 341–349 form an interaction with PCNA region; that stretch reads QQARIEGFF. Positions 356-383 are enriched in basic and acidic residues; the sequence is EEEKKAHKRKLEEQAEQKRKKVKEEKKE. Residues 356–394 form a disordered region; the sequence is EEEKKAHKRKLEEQAEQKRKKVKEEKKEKAKLKAKPRGA. Positions 384-394 are enriched in basic residues; that stretch reads KAKLKAKPRGA.

This sequence belongs to the XPG/RAD2 endonuclease family. FEN1 subfamily. In terms of assembly, interacts with PCNA. Three molecules of dnr-8/fen1 bind to one PCNA trimer with each molecule binding to one PCNA monomer. PCNA stimulates the nuclease activity without altering cleavage specificity. Requires Mg(2+) as cofactor. Post-translationally, phosphorylated. Phosphorylation upon DNA damage induces relocalization to the nuclear plasma.

Its subcellular location is the nucleus. It localises to the nucleolus. The protein resides in the nucleoplasm. The protein localises to the mitochondrion. Structure-specific nuclease with 5'-flap endonuclease and 5'-3' exonuclease activities involved in DNA replication and repair. During DNA replication, cleaves the 5'-overhanging flap structure that is generated by displacement synthesis when DNA polymerase encounters the 5'-end of a downstream Okazaki fragment. It enters the flap from the 5'-end and then tracks to cleave the flap base, leaving a nick for ligation. Also involved in the long patch base excision repair (LP-BER) pathway, by cleaving within the apurinic/apyrimidinic (AP) site-terminated flap. Acts as a genome stabilization factor that prevents flaps from equilibrating into structures that lead to duplications and deletions. Also possesses 5'-3' exonuclease activity on nicked or gapped double-stranded DNA, and exhibits RNase H activity. Also involved in replication and repair of rDNA and in repairing mitochondrial DNA. In Neurospora crassa (strain ATCC 24698 / 74-OR23-1A / CBS 708.71 / DSM 1257 / FGSC 987), this protein is Flap endonuclease 1 (dnr-8).